Here is a 310-residue protein sequence, read N- to C-terminus: Ribonuclease Z (310 aa).

Zn(2+) contacts are provided by His60, His62, Asp64, His65, His140, Asp209, and His269. Asp64 serves as the catalytic Proton acceptor.

This sequence belongs to the RNase Z family. Homodimer. Zn(2+) is required as a cofactor.

The catalysed reaction is Endonucleolytic cleavage of RNA, removing extra 3' nucleotides from tRNA precursor, generating 3' termini of tRNAs. A 3'-hydroxy group is left at the tRNA terminus and a 5'-phosphoryl group is left at the trailer molecule.. Zinc phosphodiesterase, which displays some tRNA 3'-processing endonuclease activity. Probably involved in tRNA maturation, by removing a 3'-trailer from precursor tRNA. This is Ribonuclease Z from Methanococcus maripaludis (strain C7 / ATCC BAA-1331).